The primary structure comprises 235 residues: Segregation and condensation protein A (235 aa).

This sequence belongs to the ScpA family. As to quaternary structure, component of a cohesin-like complex composed of ScpA, ScpB and the Smc homodimer, in which ScpA and ScpB bind to the head domain of Smc. The presence of the three proteins is required for the association of the complex with DNA.

The protein localises to the cytoplasm. Participates in chromosomal partition during cell division. May act via the formation of a condensin-like complex containing Smc and ScpB that pull DNA away from mid-cell into both cell halves. In Streptococcus equi subsp. equi (strain 4047), this protein is Segregation and condensation protein A.